We begin with the raw amino-acid sequence, 95 residues long: Translation initiation factor 1A (95 aa).

The region spanning Ser-6–Glu-80 is the S1-like domain.

This sequence belongs to the eIF-1A family.

In terms of biological role, seems to be required for maximal rate of protein biosynthesis. Enhances ribosome dissociation into subunits and stabilizes the binding of the initiator Met-tRNA(I) to 40 S ribosomal subunits. This Haloarcula marismortui (strain ATCC 43049 / DSM 3752 / JCM 8966 / VKM B-1809) (Halobacterium marismortui) protein is Translation initiation factor 1A.